The sequence spans 796 residues: Protocadherin beta-3 (796 aa).

A signal peptide spans 1 to 26 (MEAGGERFLRQRQVLLLFVFLGGSLA). The Extracellular portion of the chain corresponds to 27 to 690 (GSESRRYSVA…AQADLLTVYL (664 aa)). Cadherin domains follow at residues 35–133 (VAEE…SPVF), 138–242 (MHLK…APEF), 247–347 (YEVA…PPEL), 352–451 (VNSP…APAF), and 456–561 (YTLF…SPFV). N-linked (GlcNAc...) asparagine glycosylation is present at N169. N418 and N436 each carry an N-linked (GlcNAc...) asparagine glycan. A glycan (N-linked (GlcNAc...) asparagine) is linked at N567. The Cadherin 6 domain occupies 568-671 (GSAPCTELVP…LVDGFSQPYL (104 aa)). A helical membrane pass occupies residues 691-711 (VVALASVSSLFLFSVLLFVAV). The Cytoplasmic portion of the chain corresponds to 712–796 (RLCRRSRAAS…PSFRKSFEFS (85 aa)).

It localises to the cell membrane. Its function is as follows. Potential calcium-dependent cell-adhesion protein. May be involved in the establishment and maintenance of specific neuronal connections in the brain. This chain is Protocadherin beta-3 (PCDHB3), found in Pan troglodytes (Chimpanzee).